Here is a 286-residue protein sequence, read N- to C-terminus: Acyl-CoA-binding domain-containing protein 6 (286 aa).

Positions 32–117 constitute an ACB domain; it reads LQCQFEQAAK…VKKLDPDWSP (86 aa). Residues 59–63, Lys-85, and Tyr-104 each bind an acyl-CoA; that span reads YARYK. 2 ANK repeats span residues 182 to 211 and 215 to 244; these read EGRS…HINM and EGQT…DPSL.

Its subcellular location is the cytoplasm. The protein localises to the nucleus. Its function is as follows. Binds long-chain acyl-coenzyme A molecules with a strong preference for unsaturated C18:1-CoA. Does not bind fatty acids. Plays a role in protein N-myristoylation. This Xenopus laevis (African clawed frog) protein is Acyl-CoA-binding domain-containing protein 6 (acbd6).